We begin with the raw amino-acid sequence, 120 residues long: Adenosylhomocysteinase (120 aa).

Asparagine 34 is a binding site for NAD(+).

Belongs to the adenosylhomocysteinase family. Requires NAD(+) as cofactor.

It localises to the cytoplasm. The catalysed reaction is S-adenosyl-L-homocysteine + H2O = L-homocysteine + adenosine. It participates in amino-acid biosynthesis; L-homocysteine biosynthesis; L-homocysteine from S-adenosyl-L-homocysteine: step 1/1. May play a key role in the regulation of the intracellular concentration of adenosylhomocysteine. This is Adenosylhomocysteinase (ahcY) from Streptomyces fradiae (Streptomyces roseoflavus).